A 2475-amino-acid polypeptide reads, in one-letter code: Polyprotein pp220 (2475 aa).

A lipid anchor (N-myristoyl glycine; by host) is attached at glycine 2. The stretch at 2184 to 2211 (RNQIIGELNAFRTQLEDTRREVNNLIQT) forms a coiled coil.

This sequence belongs to the asfivirus polyprotein pp220 family. Post-translationally, the polyprotein is not glycosylated. In terms of processing, specific enzymatic cleavages in vivo by the viral pS273R protease yield mature proteins.

The protein localises to the host cytoplasm. The protein resides in the host perinuclear region. Its subcellular location is the virion. It localises to the host nucleus. In terms of biological role, essential for the core assembly. Its myristoyl moiety may function as a membrane-anchoring signal to bind the developing core shell to the inner viral envelope. Functionally, the structural protein p34 is a component of the virus core shell. Its function is as follows. The structural protein p14 is a component of the virus core shell. The structural protein p37 is a component of the virus core shell. In terms of biological role, the structural protein p150 is a component of the virus core shell. This African swine fever virus (isolate Warthog/Namibia/Wart80/1980) (ASFV) protein is Polyprotein pp220.